The following is a 324-amino-acid chain: HPr kinase/phosphorylase (324 aa).

Active-site residues include histidine 146 and lysine 167. 161 to 168 (GDSGLGKS) contributes to the ATP binding site. A Mg(2+)-binding site is contributed by serine 168. Residue aspartate 185 is the Proton acceptor; for phosphorylation activity. Proton donor; for dephosphorylation activity of the active site. The interval 209–218 (LEVRGLGLLD) is important for the catalytic mechanism of both phosphorylation and dephosphorylation. Glutamate 210 provides a ligand contact to Mg(2+). The active site involves arginine 250. The tract at residues 271 to 276 (QVAAGR) is important for the catalytic mechanism of dephosphorylation.

It belongs to the HPrK/P family. In terms of assembly, homohexamer. Requires Mg(2+) as cofactor.

The enzyme catalyses [HPr protein]-L-serine + ATP = [HPr protein]-O-phospho-L-serine + ADP + H(+). It catalyses the reaction [HPr protein]-O-phospho-L-serine + phosphate + H(+) = [HPr protein]-L-serine + diphosphate. Its function is as follows. Catalyzes the ATP- as well as the pyrophosphate-dependent phosphorylation of a specific serine residue in HPr, a phosphocarrier protein of the phosphoenolpyruvate-dependent sugar phosphotransferase system (PTS). HprK/P also catalyzes the pyrophosphate-producing, inorganic phosphate-dependent dephosphorylation (phosphorolysis) of seryl-phosphorylated HPr (P-Ser-HPr). The sequence is that of HPr kinase/phosphorylase from Ralstonia pickettii (strain 12J).